Consider the following 86-residue polypeptide: Large ribosomal subunit protein uL23 (86 aa).

The protein belongs to the universal ribosomal protein uL23 family. In terms of assembly, part of the 50S ribosomal subunit. Contacts protein L29.

Functionally, binds to 23S rRNA. One of the proteins that surrounds the polypeptide exit tunnel on the outside of the ribosome. The protein is Large ribosomal subunit protein uL23 of Methanococcus vannielii (strain ATCC 35089 / DSM 1224 / JCM 13029 / OCM 148 / SB).